We begin with the raw amino-acid sequence, 211 residues long: MSPNKHNLIAPETALIGRATSITPSLPHAVNGTILNDEKPSNYSEIIIGMGCFWGAERLFWNLPGIYSTAVGYSGGFTPNPTYEEVCSGKTGHSEVVRIIYDPLIISLEQILTLFWESHNPTQGMQQGNDIGTQYRSVIYTTTPNQLTYAQHSKQCYQQSLEQQQLESPITTEIEPAGTFYFAEDYHQQYLVKNPNGYCGLGGTGVCFIPL.

Residue C52 is part of the active site.

It belongs to the MsrA Met sulfoxide reductase family.

It carries out the reaction L-methionyl-[protein] + [thioredoxin]-disulfide + H2O = L-methionyl-(S)-S-oxide-[protein] + [thioredoxin]-dithiol. The catalysed reaction is [thioredoxin]-disulfide + L-methionine + H2O = L-methionine (S)-S-oxide + [thioredoxin]-dithiol. Has an important function as a repair enzyme for proteins that have been inactivated by oxidation. Catalyzes the reversible oxidation-reduction of methionine sulfoxide in proteins to methionine. This chain is Peptide methionine sulfoxide reductase MsrA, found in Photobacterium profundum (strain SS9).